The following is an 826-amino-acid chain: 1,4-alpha-glucan-branching enzyme 1, chloroplastic/amyloplastic (826 aa).

A chloroplast-targeting transit peptide spans 1–58 (ATTTTTTHNSKNKQYLAKQKPVELTLGYQNPNGCKVCSFGSKGSIYQKVSSGFKGVSV). Residue Asp409 is the Nucleophile of the active site. The active-site Proton donor is Glu464. Residues 782–813 (DTDVARIPDVSMESEDSNLDRIEDNSEDAVDA) are disordered.

This sequence belongs to the glycosyl hydrolase 13 family. GlgB subfamily. In terms of assembly, monomer. In terms of tissue distribution, expressed in roots, leaves, stipules, pods and flowers.

The protein localises to the plastid. Its subcellular location is the chloroplast. It is found in the amyloplast. It catalyses the reaction Transfers a segment of a (1-&gt;4)-alpha-D-glucan chain to a primary hydroxy group in a similar glucan chain.. It participates in glycan biosynthesis; starch biosynthesis. Functionally, catalyzes the formation of the alpha-1,6-glucosidic linkages in starch by scission of a 1,4-alpha-linked oligosaccharide from growing alpha-1,4-glucan chains and the subsequent attachment of the oligosaccharide to the alpha-1,6 position. May preferentially transfer long chains during branching. This Pisum sativum (Garden pea) protein is 1,4-alpha-glucan-branching enzyme 1, chloroplastic/amyloplastic (SBEII).